Here is a 20-residue protein sequence, read N- to C-terminus: GFLDIVKGVGLVALGAVSKS.

Expressed by the skin glands.

It localises to the secreted. Functionally, has antimicrobial activity. The chain is Cruzioseptin-15 from Cruziohyla calcarifer (Splendid leaf frog).